Reading from the N-terminus, the 138-residue chain is MGFPLEKSEDEWKKELGPEKYRIMRQKGTEHPGAGRFTHQFPKQGVFVCAACKELLYKASTKFESHCGWPAFFDNLPGKVKRIEDNSYGMHRVEAVCANCGGHLGHIFKGEGYSNPTDERHCINSASLEFHNEATNDN.

A MsrB domain is found at 9–133 (EDEWKKELGP…NSASLEFHNE (125 aa)). Residues cysteine 49, cysteine 52, cysteine 97, and cysteine 100 each contribute to the Zn(2+) site. The active-site Nucleophile is the cysteine 122.

It belongs to the MsrB Met sulfoxide reductase family. The cofactor is Zn(2+).

It is found in the cytoplasm. The protein localises to the nucleus. This is an uncharacterized protein from Schizosaccharomyces pombe (strain 972 / ATCC 24843) (Fission yeast).